Here is a 479-residue protein sequence, read N- to C-terminus: Arf-GAP domain and FG repeat-containing protein 2 (479 aa).

The Arf-GAP domain maps to Glu27–Gly153. Residues Cys47 to Cys70 form a C4-type zinc finger. 2 disordered regions span residues Gln150–Ala223 and Leu450–Leu479. Polar residues predominate over residues Ser157 to Gln167. At Lys174 the chain carries N6-acetyllysine. The span at Ser194–Ser218 shows a compositional bias: low complexity. Polar residues predominate over residues Ala454–Leu479.

Interacts with EPS15R.

The sequence is that of Arf-GAP domain and FG repeat-containing protein 2 (Agfg2) from Mus musculus (Mouse).